The primary structure comprises 558 residues: Formate--tetrahydrofolate ligase (558 aa).

An ATP-binding site is contributed by 66–73 (TPAGEGKT).

This sequence belongs to the formate--tetrahydrofolate ligase family.

It catalyses the reaction (6S)-5,6,7,8-tetrahydrofolate + formate + ATP = (6R)-10-formyltetrahydrofolate + ADP + phosphate. Its pathway is one-carbon metabolism; tetrahydrofolate interconversion. The chain is Formate--tetrahydrofolate ligase from Clostridium kluyveri (strain NBRC 12016).